Here is a 160-residue protein sequence, read N- to C-terminus: Phosphopantetheine adenylyltransferase (160 aa).

Thr9 serves as a coordination point for substrate. ATP is bound by residues 9–10 and His17; that span reads TF. Residues Lys41, Leu73, and Arg87 each contribute to the substrate site. Residues 88–90, Glu98, and 123–129 contribute to the ATP site; these read GLR and YSFISST.

It belongs to the bacterial CoaD family. In terms of assembly, homohexamer. Mg(2+) serves as cofactor.

Its subcellular location is the cytoplasm. The enzyme catalyses (R)-4'-phosphopantetheine + ATP + H(+) = 3'-dephospho-CoA + diphosphate. Its pathway is cofactor biosynthesis; coenzyme A biosynthesis; CoA from (R)-pantothenate: step 4/5. In terms of biological role, reversibly transfers an adenylyl group from ATP to 4'-phosphopantetheine, yielding dephospho-CoA (dPCoA) and pyrophosphate. The protein is Phosphopantetheine adenylyltransferase of Ectopseudomonas mendocina (strain ymp) (Pseudomonas mendocina).